Here is a 317-residue protein sequence, read N- to C-terminus: R2-like ligand binding oxidase (317 aa).

Residues Glu-73, Glu-106, and His-109 each coordinate Mn(2+). Residues 76 to 167 (VTQDLQPFMA…ANQVRASVTY (92 aa)) constitute a cross-link (3-(O4'-tyrosyl)-valine (Val-Tyr)). Glu-106 contributes to the Fe cation binding site. Fe cation contacts are provided by Glu-172, Glu-207, and His-210.

Belongs to the ribonucleoside diphosphate reductase small chain family. R2-like ligand binding oxidase subfamily. As to quaternary structure, homodimer. It depends on Fe cation as a cofactor. The cofactor is Mn(2+).

Its function is as follows. Probable oxidase. This chain is R2-like ligand binding oxidase, found in Saccharopolyspora erythraea (strain ATCC 11635 / DSM 40517 / JCM 4748 / NBRC 13426 / NCIMB 8594 / NRRL 2338).